We begin with the raw amino-acid sequence, 283 residues long: Small ribosomal subunit protein uS2 (283 aa).

Positions 229–283 (RSAGKSGEQPAEAEPMPDWERELLEGDGAKTEAKAEEPKAEAKKADEAPEAEKSN) are disordered. The span at 246–283 (DWERELLEGDGAKTEAKAEEPKAEAKKADEAPEAEKSN) shows a compositional bias: basic and acidic residues.

It belongs to the universal ribosomal protein uS2 family.

This Cutibacterium acnes (strain DSM 16379 / KPA171202) (Propionibacterium acnes) protein is Small ribosomal subunit protein uS2.